The chain runs to 514 residues: Maturase K (514 aa).

The protein belongs to the intron maturase 2 family. MatK subfamily.

It localises to the plastid. The protein localises to the chloroplast. Its function is as follows. Usually encoded in the trnK tRNA gene intron. Probably assists in splicing its own and other chloroplast group II introns. The polypeptide is Maturase K (Phoenix dactylifera (Date palm)).